Reading from the N-terminus, the 393-residue chain is Stearoyl-[acyl-carrier-protein] 9-desaturase, chloroplastic (393 aa).

The transit peptide at 1 to 31 directs the protein to the chloroplast; the sequence is MASMVAFRPEAFLCFSPPKTTRSTRSPRISM. Positions 135, 173, 176, 226, 259, and 262 each coordinate Fe cation.

It belongs to the fatty acid desaturase type 2 family. Homodimer. The cofactor is Fe(2+).

The protein localises to the plastid. Its subcellular location is the chloroplast. It carries out the reaction octadecanoyl-[ACP] + 2 reduced [2Fe-2S]-[ferredoxin] + O2 + 2 H(+) = (9Z)-octadecenoyl-[ACP] + 2 oxidized [2Fe-2S]-[ferredoxin] + 2 H2O. The protein operates within lipid metabolism; fatty acid metabolism. Converts stearoyl-ACP to oleoyl-ACP by introduction of a cis double bond between carbons 9 and 10 of the acyl chain. In Elaeis guineensis var. tenera (Oil palm), this protein is Stearoyl-[acyl-carrier-protein] 9-desaturase, chloroplastic.